The sequence spans 386 residues: GTPase Obg (386 aa).

Positions 1 to 159 constitute an Obg domain; that stretch reads MKFIDEARIE…RTLKLELKVL (159 aa). One can recognise an OBG-type G domain in the interval 160–348; it reads ADVGLLGMPN…LTFAIMSYLD (189 aa). GTP-binding positions include 166–173, 191–195, 213–216, 284–287, and 329–331; these read GMPNAGKS, FTTLH, DIPG, NKVD, and SAL. Residues Ser-173 and Thr-193 each contribute to the Mg(2+) site.

Belongs to the TRAFAC class OBG-HflX-like GTPase superfamily. OBG GTPase family. Monomer. It depends on Mg(2+) as a cofactor.

The protein localises to the cytoplasm. In terms of biological role, an essential GTPase which binds GTP, GDP and possibly (p)ppGpp with moderate affinity, with high nucleotide exchange rates and a fairly low GTP hydrolysis rate. Plays a role in control of the cell cycle, stress response, ribosome biogenesis and in those bacteria that undergo differentiation, in morphogenesis control. The polypeptide is GTPase Obg (Chromobacterium violaceum (strain ATCC 12472 / DSM 30191 / JCM 1249 / CCUG 213 / NBRC 12614 / NCIMB 9131 / NCTC 9757 / MK)).